Consider the following 93-residue polypeptide: Cytochrome c (93 aa).

Residues 1–13 are compositionally biased toward low complexity; sequence AALPPGDAAAAQG. The tract at residues 1-21 is disordered; the sequence is AALPPGDAAAAQGGSNGVGPN. M70 lines the heme c pocket.

It belongs to the cytochrome c family. In terms of processing, binds 1 heme c group covalently per subunit.

Its subcellular location is the mitochondrion intermembrane space. Electron carrier protein. The oxidized form of the cytochrome c heme group can accept an electron from the heme group of the cytochrome c1 subunit of cytochrome reductase. Cytochrome c then transfers this electron to the cytochrome oxidase complex, the final protein carrier in the mitochondrial electron-transport chain. This is Cytochrome c from Trypanosoma brucei brucei.